The primary structure comprises 3433 residues: Genome polyprotein (3433 aa).

The tract at residues 2–15 (SKKPGGPGKSRAVN) is interaction with host EXOC1. Over 2–108 (SKKPGGPGKS…SSKQKKRGGK (107 aa)) the chain is Cytoplasmic. Positions 37–72 (LIDGKGPIRFVLALLAFFRFTAIAPTRAVLDRWRGV) are hydrophobic; homodimerization of capsid protein C. Residues 106-123 (GGKTGIAVMIGLIASVGA) constitute a propeptide, ER anchor for the capsid protein C, removed in mature form by serine protease NS3. The helical transmembrane segment at 109–129 (TGIAVMIGLIASVGAVTLSNF) threads the bilayer. The Extracellular segment spans residues 130-248 (QGKVMMTVNA…KATRYLVKTE (119 aa)). N-linked (GlcNAc...) asparagine; by host glycosylation is present at Asn-138. A helical membrane pass occupies residues 249–269 (SWILRNPGYALVAAVIGWMLG). The Cytoplasmic portion of the chain corresponds to 270–275 (SNTMQR). The chain crosses the membrane as a helical span at residues 276-290 (VVFVVLLLLVAPAYS). The Extracellular portion of the chain corresponds to 291–743 (FNCLGMSNRD…QVFGGAFRSL (453 aa)). Disulfide bonds link Cys-293-Cys-320, Cys-350-Cys-406, Cys-350-Cys-411, Cys-364-Cys-395, Cys-382-Cys-406, and Cys-382-Cys-411. Residues 388–401 (DRGWGNGCGLFGKG) are fusion peptide. An N-linked (GlcNAc...) asparagine; by host glycan is attached at Asn-444. 2 disulfides stabilise this stretch: Cys-480–Cys-578 and Cys-595–Cys-626. The helical transmembrane segment at 744–764 (FGGMSWITQGLLGALLLWMGI) threads the bilayer. Over 765 to 770 (NARDRS) the chain is Cytoplasmic. The helical transmembrane segment at 771–791 (IALTFLAVGGVLLFLSVNVHA) threads the bilayer. Residues 792 to 1216 (DTGCAIDISR…AFAESNSGGD (425 aa)) lie on the Extracellular side of the membrane. Cystine bridges form between Cys-795–Cys-806 and Cys-846–Cys-934. 3 N-linked (GlcNAc...) asparagine; by host glycosylation sites follow: Asn-921, Asn-966, and Asn-998. 4 disulfides stabilise this stretch: Cys-970–Cys-1014, Cys-1071–Cys-1120, Cys-1082–Cys-1103, and Cys-1104–Cys-1107. A helical transmembrane segment spans residues 1217-1237 (VVHLALMATFKIQPVFMVASF). Topologically, residues 1238 to 1245 (LKARWTNQ) are cytoplasmic. Residues 1246–1268 (ENILLMLAAVFFQMAYHDARQIL) form a helical membrane-spanning segment. At 1269-1288 (LWEIPDVLNSLAVAWMILRA) the chain is on the lumenal side. The helical transmembrane segment at 1289-1309 (ITFTTTSNVVVPLLALLTPGL) threads the bilayer. Over 1310-1313 (RCLN) the chain is Cytoplasmic. The chain crosses the membrane as a helical span at residues 1314–1331 (LDVYRILLLMVGIGSLIR). Topologically, residues 1332-1345 (EKRSAAAKKKGASL) are lumenal. The helical transmembrane segment at 1346–1366 (LCLALASTGLFNPMILAAGLI) threads the bilayer. Residues 1367–1375 (ACDPNRKRG) lie on the Cytoplasmic side of the membrane. A helical membrane pass occupies residues 1376 to 1396 (WPATEVMTAVGLMFAIVGGLA). Over 1397–1399 (ELD) the chain is Lumenal. Residues 1400–1420 (IDSMAIPMTIAGLMFAAFVIS) form a helical membrane-spanning segment. The Cytoplasmic segment spans residues 1421-1477 (GKSTDMWIERTADISWESDAEITGSSERVDVRLDDDGNFQLMNDPGAPWKIWMLRMV). The tract at residues 1428–1467 (IERTADISWESDAEITGSSERVDVRLDDDGNFQLMNDPGA) is interacts with and activates NS3 protease. The helical intramembrane region spans 1478-1498 (CLAISAYTPWAILPSVVGFWI). Over 1499–2174 (TLQYTKRGGV…RMALEELPDA (676 aa)) the chain is Cytoplasmic. Residues 1506–1683 (GGVLWDTPSP…ERMDEPIPAG (178 aa)) form the Peptidase S7 domain. Catalysis depends on charge relay system; for serine protease NS3 activity residues His-1556, Asp-1580, and Ser-1640. A Helicase ATP-binding domain is found at 1686-1842 (PEMLRKKQIT…ESNSPISDLQ (157 aa)). Positions 1690 to 1693 (RKKQ) are important for RNA-binding. 1699–1706 (LHPGAGKT) contributes to the ATP binding site. Residues 1790–1793 (DEAH) carry the DEAH box motif. In terms of domain architecture, Helicase C-terminal spans 1853 to 2018 (GYEWITEYTG…GLIAQFYQPE (166 aa)). Residue Lys-1894 is modified to N6-acetyllysine; by host. Positions 2169-2173 (EELPD) are regulates the ATPase activity of NS3 helicase. A helical transmembrane segment spans residues 2175–2195 (LQTIALIALLSVMTMGVFFLL). Residues 2196 to 2200 (MQRKG) are Lumenal-facing. The segment at residues 2201-2221 (IGKIGLGGAVLGVATFFCWMA) is an intramembrane region (helical). Residue Glu-2222 is a topological domain, lumenal. A helical transmembrane segment spans residues 2223–2243 (VPGTKIAGMLLLSLLLMIVLI). At 2244 to 2258 (PEPEKQRSQTDNQLA) the chain is on the cytoplasmic side. A helical transmembrane segment spans residues 2259–2279 (VFLICVMTLVSAVAANEMGWL). Topologically, residues 2280–2312 (DKTKSDISSLFGQRIEVKENFSMGEFLLDLRPA) are lumenal. An intramembrane region (helical) is located at residues 2313–2333 (TAWSLYAVTTAVLTPLLKHLI). Residues 2334 to 2380 (TSDYINTSLTSINVQASALFTLARGFPFVDVGVSALLLAAGCWGQVT) are Lumenal-facing. The chain crosses the membrane as a helical span at residues 2381–2401 (LTVTVTAATLLFCHYAYMVPG). Residues 2402–2444 (WQAEAMRSAQRRTAAGIMKNAVVDGIVATDVPELERTTPIMQK) are Cytoplasmic-facing. Residues 2445 to 2465 (KVGQIMLILVSLAAVVVNPSV) form a helical membrane-spanning segment. The Lumenal segment spans residues 2466 to 2470 (KTVRE). The chain crosses the membrane as a helical span at residues 2471–2491 (AGILITAAAVTLWENGASSVW). At 2492–3433 (NATTAIGLCH…DTTLVEDTVL (942 aa)) the chain is on the cytoplasmic side. Positions 2529–2794 (GGAKGRTLGE…DVNLGSGTRA (266 aa)) constitute an mRNA cap 0-1 NS5-type MT domain. Ser-2584 contributes to the S-adenosyl-L-methionine binding site. Ser-2584 is modified (phosphoserine). Residue Lys-2589 is the For 2'-O-MTase activity of the active site. S-adenosyl-L-methionine contacts are provided by Gly-2614, Trp-2615, Thr-2632, Lys-2633, Glu-2639, Asp-2659, Val-2660, Asp-2674, and Ile-2675. Asp-2674 serves as the catalytic For 2'-O-MTase activity. Catalysis depends on for 2'-O-MTase activity residues Lys-2710 and Glu-2746. Residue Tyr-2748 coordinates S-adenosyl-L-methionine. The Nuclear localization signal signature appears at 2917-2919 (REK). Zn(2+) is bound by residues Glu-2968, His-2972, Cys-2977, and Cys-2980. The region spanning 3058-3210 (GKIYADDTAG…KPLDDRFATS (153 aa)) is the RdRp catalytic domain. Residues His-3245, Cys-3261, and Cys-3380 each contribute to the Zn(2+) site. Positions 3431–3433 (TVL) match the PDZ-binding motif.

It in the N-terminal section; belongs to the class I-like SAM-binding methyltransferase superfamily. mRNA cap 0-1 NS5-type methyltransferase family. As to quaternary structure, homodimer. Interacts (via N-terminus) with host EXOC1 (via C-terminus); this interaction results in EXOC1 degradation through the proteasome degradation pathway. Interacts with host DDX56; this interaction plays an important role in genomic RNA encapsidation. In terms of assembly, forms heterodimers with envelope protein E in the endoplasmic reticulum and Golgi. Homodimer; in the endoplasmic reticulum and Golgi. As to quaternary structure, homodimer; Homohexamer when secreted. NS1 interacts with NS4B. Interacts with host complement protein CFH; this interaction leads to the degradation of C3. In terms of assembly, forms a heterodimer with serine protease NS3. May form homooligomers. Interacts with human SPCS1. Forms a heterodimer with NS2B. Interacts with NS4B. Interacts with unphosphorylated RNA-directed RNA polymerase NS5; this interaction stimulates RNA-directed RNA polymerase NS5 guanylyltransferase activity. As to quaternary structure, interacts with host RTN3; this interaction is important to remodel host cell membranes. In terms of assembly, interacts with Serine protease/Helicase NS3. Interacts with NS1. Homodimer. Interacts with host STAT2; this interaction inhibits the phosphorylation of the latter, and, when all viral proteins are present (polyprotein), targets STAT2 for degradation. Post-translationally, specific enzymatic cleavages in vivo yield mature proteins. Cleavages in the lumen of endoplasmic reticulum are performed by host signal peptidase, whereas cleavages in the cytoplasmic side are performed by serine protease NS3. Signal cleavage at the 2K-4B site requires a prior NS3 protease-mediated cleavage at the 4A-2K site. Cleaved in post-Golgi vesicles by a host furin, releasing the mature small envelope protein M, and peptide pr. This cleavage is incomplete as up to 30% of viral particles still carry uncleaved prM. In terms of processing, N-glycosylated. Post-translationally, N-glycosylated. The excreted form is glycosylated and this is required for efficient secretion of the protein from infected cells. Acetylated by host KAT5. Acetylation modulates NS3 RNA-binding and unwinding activities and plays an important positive role for viral replication. In terms of processing, phosphorylated on serines residues. This phosphorylation may trigger NS5 nuclear localization.

The protein localises to the virion. The protein resides in the host nucleus. Its subcellular location is the host cytoplasm. It localises to the host perinuclear region. It is found in the secreted. The protein localises to the virion membrane. The protein resides in the host endoplasmic reticulum membrane. It catalyses the reaction Selective hydrolysis of -Xaa-Xaa-|-Yaa- bonds in which each of the Xaa can be either Arg or Lys and Yaa can be either Ser or Ala.. It carries out the reaction RNA(n) + a ribonucleoside 5'-triphosphate = RNA(n+1) + diphosphate. The catalysed reaction is a ribonucleoside 5'-triphosphate + H2O = a ribonucleoside 5'-diphosphate + phosphate + H(+). The enzyme catalyses ATP + H2O = ADP + phosphate + H(+). It catalyses the reaction a 5'-end (5'-triphosphoguanosine)-ribonucleoside in mRNA + S-adenosyl-L-methionine = a 5'-end (N(7)-methyl 5'-triphosphoguanosine)-ribonucleoside in mRNA + S-adenosyl-L-homocysteine. It carries out the reaction a 5'-end (N(7)-methyl 5'-triphosphoguanosine)-ribonucleoside in mRNA + S-adenosyl-L-methionine = a 5'-end (N(7)-methyl 5'-triphosphoguanosine)-(2'-O-methyl-ribonucleoside) in mRNA + S-adenosyl-L-homocysteine + H(+). Its function is as follows. Plays a role in virus budding by binding to the cell membrane and gathering the viral RNA into a nucleocapsid that forms the core of a mature virus particle. During virus entry, may induce genome penetration into the host cytoplasm after hemifusion induced by the surface proteins. Can migrate to the cell nucleus where it modulates host functions. Overcomes the anti-viral effects of host EXOC1 by sequestering and degrading the latter through the proteasome degradation pathway. In terms of biological role, inhibits RNA silencing by interfering with host Dicer. Functionally, prevents premature fusion activity of envelope proteins in trans-Golgi by binding to envelope protein E at pH6.0. After virion release in extracellular space, gets dissociated from E dimers. Acts as a chaperone for envelope protein E during intracellular virion assembly by masking and inactivating envelope protein E fusion peptide. prM is the only viral peptide matured by host furin in the trans-Golgi network probably to avoid catastrophic activation of the viral fusion activity in acidic Golgi compartment prior to virion release. prM-E cleavage is inefficient, and many virions are only partially matured. These uncleaved prM would play a role in immune evasion. Its function is as follows. May play a role in virus budding. Exerts cytotoxic effects by activating a mitochondrial apoptotic pathway through M ectodomain. May display a viroporin activity. In terms of biological role, binds to host cell surface receptor and mediates fusion between viral and cellular membranes. Envelope protein is synthesized in the endoplasmic reticulum in the form of heterodimer with protein prM. They play a role in virion budding in the ER, and the newly formed immature particle is covered with 60 spikes composed of heterodimer between precursor prM and envelope protein E. The virion is transported to the Golgi apparatus where the low pH causes dissociation of PrM-E heterodimers and formation of E homodimers. prM-E cleavage is inefficient, and many virions are only partially matured. These uncleaved prM would play a role in immune evasion. Functionally, involved in immune evasion, pathogenesis and viral replication. Once cleaved off the polyprotein, is targeted to three destinations: the viral replication cycle, the plasma membrane and the extracellular compartment. Essential for viral replication. Required for formation of the replication complex and recruitment of other non-structural proteins to the ER-derived membrane structures. Excreted as a hexameric lipoparticle that plays a role against host immune response. Antagonizing the complement function. Binds to the host macrophages and dendritic cells. Inhibits signal transduction originating from Toll-like receptor 3 (TLR3). Component of the viral RNA replication complex that functions in virion assembly and antagonizes the host alpha/beta interferon antiviral response. Its function is as follows. Required cofactor for the serine protease function of NS3. May have membrane-destabilizing activity and form viroporins. In terms of biological role, displays three enzymatic activities: serine protease, NTPase and RNA helicase. NS3 serine protease, in association with NS2B, performs its autocleavage and cleaves the polyprotein at dibasic sites in the cytoplasm: C-prM, NS2A-NS2B, NS2B-NS3, NS3-NS4A, NS4A-2K and NS4B-NS5. NS3 RNA helicase binds RNA and unwinds dsRNA in the 3' to 5' direction. NS3 supports the separation of RNA daughter and template strands during viral replication. The helicase part is involved in the inhibition of phosphorylation of host STAT1, and thereby inhibition of host type-I IFN signaling. In addition, NS3 assists the initiation of replication by unwinding the RNA secondary structure in the 3' non-translated region (NTR). Inhibits STAT2 translocation in the nucleus after IFN-alpha treatment. Functionally, facilitates host membrane remodelling necessary for viral replication by interacting with host RTN3. Regulates the ATPase activity of the NS3 helicase activity. NS4A allows NS3 helicase to conserve energy during unwinding. Functions as a signal peptide for NS4B and is required for the interferon antagonism activity of the latter. Its function is as follows. Induces the formation of ER-derived membrane vesicles where the viral replication takes place. Inhibits interferon (IFN)-induced host STAT1 phosphorylation and nuclear translocation, thereby preventing the establishment of cellular antiviral state by blocking the IFN-alpha/beta pathway. Inhibits STAT2 translocation in the nucleus after IFN-alpha treatment. In terms of biological role, replicates the viral (+) and (-) genome, and performs the capping of genomes in the cytoplasm. NS5 methylates viral RNA cap at guanine N-7 and ribose 2'-O positions. Besides its role in RNA genome replication, also prevents the establishment of cellular antiviral state by blocking the interferon-alpha/beta (IFN-alpha/beta) signaling pathway. Inhibits host JAK1 and TYK2 phosphorylation, thereby preventing activation of JAK-STAT signaling pathway. In Aedes (Tropical bont tick), this protein is Genome polyprotein.